We begin with the raw amino-acid sequence, 700 residues long: Calpain-2 catalytic subunit (700 aa).

Ala2 is subject to N-acetylalanine. Positions 2 to 19 (AGIAAKLAKDREAAEGLG) are cleaved as a propeptide — anchors to the small subunit. A Calpain catalytic domain is found at 45–344 (LFQDPSFPAI…YSRLEICNLT (300 aa)). Residues Ile89, Gly91, and Asp96 each contribute to the Ca(2+) site. Cys105 is an active-site residue. Ca(2+) is bound by residues Glu175, Gln229, and Lys230. Active-site residues include His262 and Asn286. Positions 292, 299, and 323 each coordinate Ca(2+). Residues 345–514 (PDTLTSDTYK…KKADYQAVDD (170 aa)) are domain III. Residues 515–529 (EIEANLEEFDISEDD) are linker. Residues 530-700 (IDDGFRRLFA…LISWLCFSVL (171 aa)) are domain IV. Ca(2+) is bound by residues Ala542, Asp545, Glu547, Glu552, Asp585, Asp587, Ser589, Lys591, Glu596, Asp615, Asp617, Ser619, Thr621, Glu626, Asp658, and Asn661. EF-hand domains are found at residues 572–605 (FSIETCKIMVDMLDSDGSGKLGLKEFYILWTKIQ) and 602–637 (TKIQKYQKIYREIDVDRSGTMNSYEMRKALEEAGFK). An EF-hand 3 domain is found at 667-700 (VRLETLFKIFKQLDPENTGTIELDLISWLCFSVL).

Belongs to the peptidase C2 family. In terms of assembly, forms a heterodimer with a small (regulatory) subunit (CAPNS1). Interacts with CPEB3; this leads to cleavage of CPEB3. Interacts with PIDD1 alternative open reading frame protein altPIDD1. Ca(2+) serves as cofactor. As to expression, ubiquitous.

The protein localises to the cytoplasm. Its subcellular location is the cell membrane. The enzyme catalyses Broad endopeptidase specificity.. Its activity is regulated as follows. Activated by 200-1000 micromolar concentrations of calcium and inhibited by calpastatin. Functionally, calcium-regulated non-lysosomal thiol-protease which catalyzes limited proteolysis of substrates involved in cytoskeletal remodeling and signal transduction. Proteolytically cleaves MYOC at 'Arg-226'. Proteolytically cleaves CPEB3 following neuronal stimulation which abolishes CPEB3 translational repressor activity, leading to translation of CPEB3 target mRNAs. This Homo sapiens (Human) protein is Calpain-2 catalytic subunit (CAPN2).